Here is a 158-residue protein sequence, read N- to C-terminus: NAD(P)H-quinone oxidoreductase subunit J, chloroplastic (158 aa).

This sequence belongs to the complex I 30 kDa subunit family. In terms of assembly, NDH is composed of at least 16 different subunits, 5 of which are encoded in the nucleus.

It localises to the plastid. The protein localises to the chloroplast thylakoid membrane. It carries out the reaction a plastoquinone + NADH + (n+1) H(+)(in) = a plastoquinol + NAD(+) + n H(+)(out). It catalyses the reaction a plastoquinone + NADPH + (n+1) H(+)(in) = a plastoquinol + NADP(+) + n H(+)(out). Its function is as follows. NDH shuttles electrons from NAD(P)H:plastoquinone, via FMN and iron-sulfur (Fe-S) centers, to quinones in the photosynthetic chain and possibly in a chloroplast respiratory chain. The immediate electron acceptor for the enzyme in this species is believed to be plastoquinone. Couples the redox reaction to proton translocation, and thus conserves the redox energy in a proton gradient. The chain is NAD(P)H-quinone oxidoreductase subunit J, chloroplastic from Solanum lycopersicum (Tomato).